We begin with the raw amino-acid sequence, 68 residues long: uncharacterized protein (68 aa).

This is an uncharacterized protein from Dictyostelium discoideum (Social amoeba).